The chain runs to 457 residues: Proton-translocating ferredoxin:NAD(+) oxidoreductase complex subunit C (457 aa).

2 consecutive 4Fe-4S ferredoxin-type domains span residues 353 to 386 (TKND…MLSI) and 396 to 427 (AKEE…YIRY). [4Fe-4S] cluster-binding residues include Cys-365, Cys-368, Cys-371, Cys-375, Cys-405, Cys-408, Cys-411, and Cys-415. The segment at 433–457 (RAAGEREKAKAAKAKEKKEKEEVLK) is disordered.

It belongs to the 4Fe4S bacterial-type ferredoxin family. RnfC subfamily. As to quaternary structure, the complex is composed of six subunits: RnfA, RnfB, RnfC, RnfD, RnfE and RnfG. [4Fe-4S] cluster serves as cofactor.

It is found in the cell membrane. Its function is as follows. Part of a membrane-bound complex that couples electron transfer with translocation of ions across the membrane. Couples electron transfer from reduced ferredoxin to NAD(+) with translocation of H(+) out of the cell. Essential for energy conservation during autotrophic growth. Contributes to ATP synthesis during heterotrophic growth. This chain is Proton-translocating ferredoxin:NAD(+) oxidoreductase complex subunit C, found in Clostridium ljungdahlii (strain ATCC 55383 / DSM 13528 / PETC).